A 467-amino-acid polypeptide reads, in one-letter code: Serine/threonine-protein kinase US3 homolog (467 aa).

The tract at residues 64–155 (GPEVAPPART…PAGGVTREEA (92 aa)) is disordered. The segment covering 99–111 (NERRAATGDEKES) has biased composition (basic and acidic residues). Acidic residues predominate over residues 117 to 144 (NESESESESESESESGADDGDWDDDDDA). One can recognise a Protein kinase domain in the interval 164–462 (FRIIRRLTPG…AAELLEHPVF (299 aa)). ATP is bound by residues 170–178 (LTPGSEGRV) and Lys-194. Asp-279 (proton acceptor) is an active-site residue.

This sequence belongs to the protein kinase superfamily. Ser/Thr protein kinase family. Phosphorylated by UL13 homolog; this phosphorylation regulates subsequent phosphorylation of UL31 and UL34 homologs by US3. Autophosphorylated.

Its subcellular location is the host cytoplasm. It is found in the host nucleus. The enzyme catalyses L-seryl-[protein] + ATP = O-phospho-L-seryl-[protein] + ADP + H(+). The catalysed reaction is L-threonyl-[protein] + ATP = O-phospho-L-threonyl-[protein] + ADP + H(+). Functionally, multifunctional serine/threonine kinase that plays a role in several processes including egress of virus particles from the nucleus, modulation of the actin cytoskeleton and inhibition of apoptosis. Phosphorylates UL31 and UL34 homologs, two critical regulators of capsid budding from nucleus to endoplasmic reticulum, thereby facilitating virion egress. Modulates and redistributes host components of the nuclear envelope, including LMNA, emerin/EMD and the nuclear matrix protein MATR3. Phosphorylates envelope glycoprotein B (gB), probably to direct it to the cell surface. Promotes virus intracellular spread by restructuring host cell cytoskeleton. Blocks host apoptosis to extend cell survival and allow efficient viral replication. Promotes viral gene expression by phosphorylating host HDAC2 to reduce viral genome silencing. The sequence is that of Serine/threonine-protein kinase US3 homolog from Bos taurus (Bovine).